Reading from the N-terminus, the 510-residue chain is Lysine--tRNA ligase (510 aa).

The Mg(2+) site is built by glutamate 420 and glutamate 427.

It belongs to the class-II aminoacyl-tRNA synthetase family. In terms of assembly, homodimer. Requires Mg(2+) as cofactor.

Its subcellular location is the cytoplasm. It catalyses the reaction tRNA(Lys) + L-lysine + ATP = L-lysyl-tRNA(Lys) + AMP + diphosphate. This is Lysine--tRNA ligase from Psychrobacter sp. (strain PRwf-1).